A 1382-amino-acid polypeptide reads, in one-letter code: Ninein-like protein (1382 aa).

EF-hand domains lie at 7–42 (HYVS…LHLE) and 41–76 (LEQQ…VLSS). A disordered region spans residues 144 to 164 (ASLESVESPKSDEEAESTKEA). Residue serine 148 is modified to Phosphoserine. A compositionally biased stretch (basic and acidic residues) spans 150-164 (ESPKSDEEAESTKEA). EF-hand domains are found at residues 196 to 231 (TPES…VGLQ) and 233 to 268 (LEKE…HEPA). Positions 246, 248, 250, 252, and 257 each coordinate Ca(2+). Coiled-coil stretches lie at residues 384-424 (QELS…MDDC), 484-579 (AGLR…WARL), and 616-699 (IETE…QLQD). The KEN box signature appears at 495–497 (KEN). Residues 633–641 (RTQLETKVN) carry the D-box motif. 2 disordered regions span residues 857-969 (PLAW…ASCR) and 982-1006 (RARS…GALE). Low complexity predominate over residues 991-1004 (QEQASEQQARAEGA). A coiled-coil region spans residues 1046–1375 (ETKIALEREK…RALNKLVSRI (330 aa)).

As to quaternary structure, interacts with gamma-tubulin and TUBGCP4. Interacts with anaphase promoting complex/cyclosome (APC/C). Interacts with CDC20 and FZR1. Isoform 2 interacts with LCA5 and USH2A. Isoform 2 interacts with DZANK1. Phosphorylated by PLK1 which disrupts its centrosome association and interaction with gamma-tubulin. In terms of processing, ubiquitinated by the APC/C complex leading to its degradation. As to expression, expressed in KYSE-150 esophageal carcinoma, HeLa cervical carcinoma and U2OS osteosarcoma cells. Expression is regulated in a cell cycle-dependent manner and peaks during G2/M phase (at protein level). Expressed in fetal heart, skeletal muscle, liver, lung and cochlea, and in adult brain, testis, kidney and retina.

It is found in the cytoplasm. Its subcellular location is the cytoskeleton. The protein localises to the microtubule organizing center. The protein resides in the centrosome. Involved in the microtubule organization in interphase cells. Overexpression induces the fragmentation of the Golgi, and causes lysosomes to disperse toward the cell periphery; it also interferes with mitotic spindle assembly. Involved in vesicle transport in photoreceptor cells. May play a role in ovarian carcinogenesis. This chain is Ninein-like protein (NINL), found in Homo sapiens (Human).